A 171-amino-acid chain; its full sequence is S-ribosylhomocysteine lyase (171 aa).

Positions 54, 58, and 128 each coordinate Fe cation.

It belongs to the LuxS family. As to quaternary structure, homodimer. Fe cation serves as cofactor.

The catalysed reaction is S-(5-deoxy-D-ribos-5-yl)-L-homocysteine = (S)-4,5-dihydroxypentane-2,3-dione + L-homocysteine. Involved in the synthesis of autoinducer 2 (AI-2) which is secreted by bacteria and is used to communicate both the cell density and the metabolic potential of the environment. The regulation of gene expression in response to changes in cell density is called quorum sensing. Catalyzes the transformation of S-ribosylhomocysteine (RHC) to homocysteine (HC) and 4,5-dihydroxy-2,3-pentadione (DPD). This Pectobacterium carotovorum subsp. carotovorum (strain PC1) protein is S-ribosylhomocysteine lyase.